We begin with the raw amino-acid sequence, 271 residues long: Mannosyl-3-phosphoglycerate phosphatase (271 aa).

Residue Asp-13 is the Nucleophile of the active site. Asp-13, Asp-15, and Asp-214 together coordinate Mg(2+).

This sequence belongs to the HAD-like hydrolase superfamily. MPGP family. Requires Mg(2+) as cofactor.

It is found in the cytoplasm. The enzyme catalyses 2-O-(alpha-D-mannosyl)-3-phosphoglycerate + H2O = (2R)-2-O-(alpha-D-mannosyl)-glycerate + phosphate. The protein is Mannosyl-3-phosphoglycerate phosphatase (yedP) of Escherichia coli O6:H1 (strain CFT073 / ATCC 700928 / UPEC).